The primary structure comprises 761 residues: Protein ACTIVITY OF BC1 COMPLEX KINASE 8, chloroplastic (761 aa).

The transit peptide at 1 to 57 directs the protein to the chloroplast; the sequence is MATSSSSSSSLLLPNINFNSRQSPTITRSVSIAGIFLPRNRLSYNHNLRIRTRLIRA. Positions 288–648 constitute a Protein kinase domain; sequence RFDYEPIAAA…VKDLRKRWDR (361 aa). Residues 294-302 and Lys315 contribute to the ATP site; that span reads IAAASLGQV. Asp452 serves as the catalytic Proton acceptor. A helical membrane pass occupies residues 725-745; it reads PATIAYTVCAFFSLQVLIGII.

This sequence belongs to the protein kinase superfamily. ADCK protein kinase family. Mostly expressed in leaves and flowers, and, to a lower extent, in stems, siliques and roots.

The protein localises to the plastid. It is found in the chloroplast envelope. The protein resides in the chloroplast membrane. The enzyme catalyses L-seryl-[protein] + ATP = O-phospho-L-seryl-[protein] + ADP + H(+). It catalyses the reaction L-threonyl-[protein] + ATP = O-phospho-L-threonyl-[protein] + ADP + H(+). Its function is as follows. Involved in resistance to oxidative stress (e.g. hydrogen peroxide H(2)O(2)), high light and heavy metals (e.g. cadmium ions Cd(2+)). Influences responses to reactive oxygen species (ROS) production. Together with SIA1, regulates iron distribution within the chloroplast and mediates the oxidative stress response. Together with ABC1K7, influences chloroplast lipid synthesis/accumulation and modulates chloroplast membrane composition in response to stress. This Arabidopsis thaliana (Mouse-ear cress) protein is Protein ACTIVITY OF BC1 COMPLEX KINASE 8, chloroplastic.